Reading from the N-terminus, the 393-residue chain is Thermostable carboxypeptidase 1 (393 aa).

Residues His104, Asp109, and His245 each contribute to the Zn(2+) site. Tyr302 (proton donor) is an active-site residue. The active-site Nucleophile is Glu373.

Belongs to the peptidase M20 family. As to quaternary structure, homotetramer. Requires Zn(2+) as cofactor.

In terms of biological role, can release basic, acidic, aromatic, and, to a lesser extent, aliphatic amino acids. This Saccharolobus solfataricus (strain ATCC 35092 / DSM 1617 / JCM 11322 / P2) (Sulfolobus solfataricus) protein is Thermostable carboxypeptidase 1 (cpsA1).